The following is a 1485-amino-acid chain: Cystic fibrosis transmembrane conductance regulator (1485 aa).

The Cytoplasmic segment spans residues 1 to 78; it reads MQKTPLEKAS…KLINALKRCF (78 aa). A helical transmembrane segment spans residues 79 to 99; it reads FWKFLFYGILLYLGEVTKAVQ. The ABC transmembrane type-1 1 domain occupies 82–366; it reads FLFYGILLYL…WAVQTWYDSL (285 aa). Over 100–123 the chain is Extracellular; that stretch reads PLLLGRIIASYDRDNEHERSIAYY. The chain crosses the membrane as a helical span at residues 124-147; the sequence is LAIGLCLLFVVRMLLLHPAIFGLH. At 148-196 the chain is on the cytoplasmic side; that stretch reads HIGMQMRIAMFSLIYKKTLKLSSKVLDKISTGQLVSLLSNNLNKFDEGL. Residues 197-217 form a helical membrane-spanning segment; it reads ALAHFVWIAPLQVLLLMGLLW. At 218 to 223 the chain is on the extracellular side; that stretch reads DLLQAS. A helical membrane pass occupies residues 224-244; sequence AFCGLGFLIILSLFQARLGRM. The Cytoplasmic segment spans residues 245–299; sequence MMKYKDKRAGKINERLVITSQIIENIQSVKAYCWENAMEKIIETIRETELKLTRK. A helical transmembrane segment spans residues 300 to 320; sequence AAYVRYFNSSAFFFSGFFVVF. At 321-340 the chain is on the extracellular side; that stretch reads LSIVPHLLLDGISLRKIFTT. Residues 341-359 form a helical membrane-spanning segment; the sequence is ISFSIVLRMAVTRQFPWAV. At 360–860 the chain is on the cytoplasmic side; sequence QTWYDSLGVI…YLRFLTAHKN (501 aa). ATP contacts are provided by residues Trp402, Ser435, 459–466, and Gln494; that span reads GSTGAGKT. The ABC transporter 1 domain maps to 422-647; it reads ISNEDPSAFF…RPEFSSHLIG (226 aa). The segment at 652–833 is disordered R region; sequence NAERRNSIIT…EEINEEDLKE (182 aa). Polar residues predominate over residues 750 to 760; sequence PRSNFLNTGPT. The chain crosses the membrane as a helical span at residues 861 to 881; that stretch reads FIFILVFCLVIFFVEVAASSA. The 284-residue stretch at 880 to 1163 folds into the ABC transmembrane type-1 2 domain; sequence SAWLWIIKRN…ASIDVDSLMR (284 aa). Topologically, residues 882 to 923 are extracellular; the sequence is WLWIIKRNAPAINMTSNENVSEVSDTLSVIVTHTSFYYVFYI. Asn894 and Asn900 each carry an N-linked (GlcNAc...) asparagine glycan. A discontinuously helical transmembrane segment spans residues 924 to 944; sequence YVGVADSLLALGIFRGLPLVH. Residues 945-995 are Cytoplasmic-facing; sequence SLISVSKVLHKKMLHAILHAPMSTFNTMRAGRILNRFSKDTAILDDILPLS. The chain crosses the membrane as a helical span at residues 996 to 1016; that stretch reads IFDLTQLVLIVIGAITVVSLL. Residues 1017-1018 are Extracellular-facing; the sequence is EP. A helical membrane pass occupies residues 1019 to 1039; it reads YIFLATVPVIVAFILLRSYFL. Over 1040–1100 the chain is Cytoplasmic; that stretch reads HTSQQLKQLE…TANWFLYLST (61 aa). The helical transmembrane segment at 1101 to 1121 threads the bilayer; that stretch reads LRWFQMTIEMIFVIFFIAVSF. Residues 1122-1135 are Extracellular-facing; sequence ISIATSGAGEEKVG. A helical transmembrane segment spans residues 1136 to 1156; it reads IVLTLAMNIMNTLQWAVNASI. Residues 1157 to 1485 lie on the Cytoplasmic side of the membrane; sequence DVDSLMRSVS…TEEEVQDTRL (329 aa). The region spanning 1213–1446 is the ABC transporter 2 domain; sequence MTVKNLSANY…KSFFKQAISH (234 aa). ATP-binding positions include Tyr1222 and 1247–1254; that span reads GRTGSGKS. The disordered stretch occupies residues 1458–1485; that stretch reads RNSSKRKSRPQISALQEETEEEVQDTRL. Residues 1474–1485 are compositionally biased toward acidic residues; that stretch reads EETEEEVQDTRL. Residues 1483 to 1485 carry the PDZ-binding motif; that stretch reads TRL.

Belongs to the ABC transporter superfamily. ABCC family. CFTR transporter (TC 3.A.1.202) subfamily. Monomer; does not require oligomerization for channel activity. May form oligomers in the membrane. In terms of processing, phosphorylated; cAMP treatment promotes phosphorylation and activates the channel. Dephosphorylation decreases the ATPase activity (in vitro). Phosphorylation at PKA sites activates the channel. Phosphorylation at PKC sites enhances the response to phosphorylation by PKA.

The protein localises to the apical cell membrane. Its subcellular location is the early endosome membrane. The protein resides in the cell membrane. It localises to the recycling endosome membrane. It is found in the endoplasmic reticulum membrane. The enzyme catalyses ATP + H2O + closed Cl(-) channel = ADP + phosphate + open Cl(-) channel.. It carries out the reaction chloride(in) = chloride(out). The catalysed reaction is hydrogencarbonate(in) = hydrogencarbonate(out). It catalyses the reaction ATP + H2O = ADP + phosphate + H(+). Functionally, epithelial ion channel that plays an important role in the regulation of epithelial ion and water transport and fluid homeostasis. Mediates the transport of chloride ions across the cell membrane. Possesses an intrinsic ATPase activity and utilizes ATP to gate its channel; the passive flow of anions through the channel is gated by cycles of ATP binding and hydrolysis by the ATP-binding domains. The ion channel is also permeable to HCO(3)(-); selectivity depends on the extracellular chloride concentration. Exerts its function also by modulating the activity of other ion channels and transporters. Contributes to the regulation of the pH and the ion content of the epithelial fluid layer. The protein is Cystic fibrosis transmembrane conductance regulator of Xenopus laevis (African clawed frog).